The sequence spans 116 residues: MKTIIVFLSLLVLATKFGDAKEGVNQKQKKEVTQNEFREEYLNEMAAMSLVQQLEAIERALFENEAGRNSRQKRCNGKNVPCGANHSPCCSGLSCEETFGYGWLYKSPYCVIPSNG.

The signal sequence occupies residues M1–A20. The propeptide occupies K21 to R74. 3 disulfide bridges follow: C75–C90, C82–C95, and C89–C110.

The protein belongs to the neurotoxin 14 (magi-1) family. 06 (ICK-Trit) subfamily. Expressed by the venom gland.

It localises to the secreted. Its function is as follows. Ion channel inhibitor. In Trittame loki (Brush-footed trapdoor spider), this protein is U16-barytoxin-Tl1a.